Reading from the N-terminus, the 229-residue chain is Uridylate kinase (229 aa).

Residue 11–12 (GS) coordinates ATP. G45 is a UMP binding site. ATP is bound by residues G46 and R50. UMP-binding positions include D67 and 114–120 (TEPGHTT). Positions 140, 146, and 149 each coordinate ATP.

Belongs to the UMP kinase family. Homohexamer.

The protein localises to the cytoplasm. It catalyses the reaction UMP + ATP = UDP + ADP. The protein operates within pyrimidine metabolism; CTP biosynthesis via de novo pathway; UDP from UMP (UMPK route): step 1/1. Inhibited by UTP. Catalyzes the reversible phosphorylation of UMP to UDP. The polypeptide is Uridylate kinase (Thermoplasma acidophilum (strain ATCC 25905 / DSM 1728 / JCM 9062 / NBRC 15155 / AMRC-C165)).